The sequence spans 100 residues: Class II hydrophobin CU (100 aa).

The signal sequence occupies residues 1 to 25 (MQFSIATIALFLSSAMAAPYSGNSN). Intrachain disulfides connect Cys32-Cys82, Cys42-Cys72, Cys43-Cys55, and Cys83-Cys94.

This sequence belongs to the cerato-ulmin hydrophobin family. In terms of assembly, homotetramer. Further self-assembles to form highly ordered films at water-air interfaces through intermolecular interactions.

It localises to the secreted. The protein localises to the cell wall. In terms of biological role, aerial growth, conidiation, and dispersal of filamentous fungi in the environment rely upon a capability of their secreting small amphipathic proteins called hydrophobins (HPBs) with low sequence identity. Class I can self-assemble into an outermost layer of rodlet bundles on aerial cell surfaces, conferring cellular hydrophobicity that supports fungal growth, development and dispersal; whereas Class II form highly ordered films at water-air interfaces through intermolecular interactions but contribute nothing to the rodlet structure. CU is a class II hydrophobin that is implicated in the pathogenicity of this fungus on elm trees. Required for hydrophobicity and adherence of the cells and acts as a parasitic fitness factor by protecting infectious propagules from desiccation. Reduces the interfacial tension of both oil-water and air-water interfaces. This Ophiostoma ulmi (Dutch elm disease fungus) protein is Class II hydrophobin CU.